We begin with the raw amino-acid sequence, 518 residues long: Probable thiamine biosynthetic bifunctional enzyme (518 aa).

A thiamine-phosphate synthase region spans residues 1–229 (MKRQIDYSLY…ATPPCFAQAR (229 aa)). 4-amino-2-methyl-5-(diphosphooxymethyl)pyrimidine is bound by residues 40–44 (QHREK) and Asn72. Mg(2+)-binding residues include Asp73 and Asp92. 4-amino-2-methyl-5-(diphosphooxymethyl)pyrimidine is bound at residue Ser111. 137–139 (TNT) serves as a coordination point for 2-[(2R,5Z)-2-carboxy-4-methylthiazol-5(2H)-ylidene]ethyl phosphate. Residue Lys140 participates in 4-amino-2-methyl-5-(diphosphooxymethyl)pyrimidine binding. Residues Gly173 and 199-200 (VS) contribute to the 2-[(2R,5Z)-2-carboxy-4-methylthiazol-5(2H)-ylidene]ethyl phosphate site. The hydroxyethylthiazole kinase stretch occupies residues 230–518 (SSLTTPKDLL…IERAKLEKAE (289 aa)). Position 281 (Met281) interacts with 5-(2-hydroxyethyl)-4-methylthiazole. Residues Lys355 and Ser403 each contribute to the ATP site. A 5-(2-hydroxyethyl)-4-methylthiazole-binding site is contributed by Ala430. Cys433 functions as the Proton acceptor; for hydroxyethylthiazole kinase activity in the catalytic mechanism.

The protein in the N-terminal section; belongs to the thiamine-phosphate synthase family. It in the C-terminal section; belongs to the Thz kinase family. The cofactor is Mg(2+).

It catalyses the reaction 2-[(2R,5Z)-2-carboxy-4-methylthiazol-5(2H)-ylidene]ethyl phosphate + 4-amino-2-methyl-5-(diphosphooxymethyl)pyrimidine + 2 H(+) = thiamine phosphate + CO2 + diphosphate. The enzyme catalyses 2-(2-carboxy-4-methylthiazol-5-yl)ethyl phosphate + 4-amino-2-methyl-5-(diphosphooxymethyl)pyrimidine + 2 H(+) = thiamine phosphate + CO2 + diphosphate. The catalysed reaction is 4-methyl-5-(2-phosphooxyethyl)-thiazole + 4-amino-2-methyl-5-(diphosphooxymethyl)pyrimidine + H(+) = thiamine phosphate + diphosphate. It carries out the reaction 5-(2-hydroxyethyl)-4-methylthiazole + ATP = 4-methyl-5-(2-phosphooxyethyl)-thiazole + ADP + H(+). It functions in the pathway cofactor biosynthesis; thiamine diphosphate biosynthesis; 4-methyl-5-(2-phosphoethyl)-thiazole from 5-(2-hydroxyethyl)-4-methylthiazole: step 1/1. It participates in cofactor biosynthesis; thiamine diphosphate biosynthesis; thiamine phosphate from 4-amino-2-methyl-5-diphosphomethylpyrimidine and 4-methyl-5-(2-phosphoethyl)-thiazole: step 1/1. Functionally, condenses 4-methyl-5-(beta-hydroxyethyl)thiazole monophosphate (THZ-P) and 2-methyl-4-amino-5-hydroxymethyl pyrimidine pyrophosphate (HMP-PP) to form thiamine monophosphate (TMP). The sequence is that of Probable thiamine biosynthetic bifunctional enzyme (thi4) from Schizosaccharomyces pombe (strain 972 / ATCC 24843) (Fission yeast).